We begin with the raw amino-acid sequence, 165 residues long: V-type proton ATPase 16 kDa proteolipid subunit (165 aa).

Residues Met-1–Thr-10 lie on the Lumenal side of the membrane. A helical membrane pass occupies residues Ala-11–Gly-33. Over Thr-34–Ser-55 the chain is Cytoplasmic. A helical transmembrane segment spans residues Ile-56–Ile-76. At Ser-77 to His-95 the chain is on the lumenal side. Residues Leu-96–Gly-117 traverse the membrane as a helical segment. The Cytoplasmic portion of the chain corresponds to Asp-118–Lys-129. Residues Leu-130–Leu-155 form a helical membrane-spanning segment. The Lumenal portion of the chain corresponds to Ser-156–Asp-165.

The protein belongs to the V-ATPase proteolipid subunit family. As to quaternary structure, V-ATPase is a heteromultimeric enzyme composed of a peripheral catalytic V1 complex (main components: subunits A, B, C, D, E, and F) attached to an integral membrane V0 proton pore complex (main component: the proteolipid protein; which is present as a hexamer that forms the proton-conducting pore).

It localises to the vacuole membrane. Functionally, proton-conducting pore forming subunit of the membrane integral V0 complex of vacuolar ATPase. V-ATPase is responsible for acidifying a variety of intracellular compartments in eukaryotic cells. The chain is V-type proton ATPase 16 kDa proteolipid subunit (VATP-P1) from Avena sativa (Oat).